We begin with the raw amino-acid sequence, 506 residues long: MVSSTTPSSGEYLLEMSGINKSFPGVKALDNVNLKVRPHSIHALMGENGAGKSTLLKCMFGIYQKDSGTILFQGKEIDFHSAKEALENGISMVHQELNLVLQRSVMDNMWLGRYPTKGMFVDQDKMYRETKAIFDELDIDIDPRARVGTLSVSQMQMIEIAKAFSYNAKIVIMDEPTSSLTEKEVNHLFTIIRKLKERGCGIVYISHKMEEIFQLCDEVTVLRDGQWIATEPLAGLTMDKIIAMMVGRSLNQRFPDKENKPGEVILEVRNLTSLRQPSIRDVSFDLHKGEILGIAGLVGAKRTDIVETLFGIREKSAGTITLHGKQINNHNANEAINHGFALVTEERRSTGIYAYLDIGFNSLISNIRNYKNKVGLLDNSRMKSDTQWVIDSMRVKTPGHRTQIGSLSGGNQQKVIIGRWLLTQPEILMLDEPTRGIDVGAKFEIYQLIAELAKKGKGIIIISSEMPELLGITDRILVMSNGLVSGIVDTKTTTQNEILRLASLHL.

2 ABC transporter domains span residues 14 to 249 (LEMS…VGRS) and 264 to 506 (VILE…SLHL). Residue 46–53 (GENGAGKS) participates in ATP binding.

It belongs to the ABC transporter superfamily. Galactose/methyl galactoside importer (TC 3.A.1.2.3) family. In terms of assembly, the complex is composed of one ATP-binding protein (MglA), two transmembrane proteins (MglC) and a solute-binding protein (MglB).

The protein localises to the cell inner membrane. It catalyses the reaction D-galactose(out) + ATP + H2O = D-galactose(in) + ADP + phosphate + H(+). It carries out the reaction methyl beta-D-galactoside(out) + ATP + H2O = methyl beta-D-galactoside(in) + ADP + phosphate + H(+). Its function is as follows. Part of the ABC transporter complex MglABC involved in galactose/methyl galactoside import. Responsible for energy coupling to the transport system. In Shigella flexneri serotype 5b (strain 8401), this protein is Galactose/methyl galactoside import ATP-binding protein MglA.